The primary structure comprises 726 residues: Methionine--tRNA ligase (726 aa).

Positions 12-22 match the 'HIGH' region motif; sequence PYVNNIPHLGN. Residues Cys143, Cys146, Cys155, and Cys158 each coordinate Zn(2+). A 'KMSKS' region motif is present at residues 330 to 334; that stretch reads KFSKS. Residue Lys333 coordinates ATP. The 106-residue stretch at 562–667 folds into the tRNA-binding domain; that stretch reads FSEQICLKTV…DNPIPGERVI (106 aa).

This sequence belongs to the class-I aminoacyl-tRNA synthetase family. MetG type 1 subfamily. Homodimer. Zn(2+) serves as cofactor.

The protein resides in the cytoplasm. It catalyses the reaction tRNA(Met) + L-methionine + ATP = L-methionyl-tRNA(Met) + AMP + diphosphate. Its function is as follows. Is required not only for elongation of protein synthesis but also for the initiation of all mRNA translation through initiator tRNA(fMet) aminoacylation. This chain is Methionine--tRNA ligase, found in Borrelia duttonii (strain Ly).